The following is a 117-amino-acid chain: Large ribosomal subunit protein uL24 (117 aa).

Residues 1–10 (MSKQPRKQRK) are compositionally biased toward basic residues. A disordered region spans residues 1-28 (MSKQPRKQRKALYNAPAHARGKHMSATL).

Belongs to the universal ribosomal protein uL24 family. As to quaternary structure, part of the 50S ribosomal subunit.

In terms of biological role, one of two assembly initiator proteins, it binds directly to the 5'-end of the 23S rRNA, where it nucleates assembly of the 50S subunit. Its function is as follows. Located at the polypeptide exit tunnel on the outside of the subunit. In Methanobrevibacter smithii (strain ATCC 35061 / DSM 861 / OCM 144 / PS), this protein is Large ribosomal subunit protein uL24.